Here is a 283-residue protein sequence, read N- to C-terminus: 4-diphosphocytidyl-2-C-methyl-D-erythritol kinase (283 aa).

Residue Lys-12 is part of the active site. Residue 94-104 (PAQAGLGGGSS) participates in ATP binding. Asp-136 is an active-site residue.

It belongs to the GHMP kinase family. IspE subfamily.

It carries out the reaction 4-CDP-2-C-methyl-D-erythritol + ATP = 4-CDP-2-C-methyl-D-erythritol 2-phosphate + ADP + H(+). Its pathway is isoprenoid biosynthesis; isopentenyl diphosphate biosynthesis via DXP pathway; isopentenyl diphosphate from 1-deoxy-D-xylulose 5-phosphate: step 3/6. Functionally, catalyzes the phosphorylation of the position 2 hydroxy group of 4-diphosphocytidyl-2C-methyl-D-erythritol. This Acidovorax sp. (strain JS42) protein is 4-diphosphocytidyl-2-C-methyl-D-erythritol kinase.